The following is a 149-amino-acid chain: IQ domain-containing protein F5 (149 aa).

IQ domains follow at residues 12–41 (ENKA…RAWI) and 68–97 (QEWA…AVRI).

The polypeptide is IQ domain-containing protein F5 (IQCF5) (Bos taurus (Bovine)).